A 307-amino-acid chain; its full sequence is Putative S-adenosyl-L-methionine-dependent methyltransferase MUL_4430 (307 aa).

Residues Asp128 and 157-158 (DL) contribute to the S-adenosyl-L-methionine site.

This sequence belongs to the UPF0677 family.

Its function is as follows. Exhibits S-adenosyl-L-methionine-dependent methyltransferase activity. The chain is Putative S-adenosyl-L-methionine-dependent methyltransferase MUL_4430 from Mycobacterium ulcerans (strain Agy99).